The primary structure comprises 289 residues: ATP synthase gamma chain (289 aa).

The protein belongs to the ATPase gamma chain family. As to quaternary structure, F-type ATPases have 2 components, CF(1) - the catalytic core - and CF(0) - the membrane proton channel. CF(1) has five subunits: alpha(3), beta(3), gamma(1), delta(1), epsilon(1). CF(0) has three main subunits: a, b and c.

It is found in the cell inner membrane. Functionally, produces ATP from ADP in the presence of a proton gradient across the membrane. The gamma chain is believed to be important in regulating ATPase activity and the flow of protons through the CF(0) complex. This Anaeromyxobacter dehalogenans (strain 2CP-C) protein is ATP synthase gamma chain.